Consider the following 209-residue polypeptide: Glycerol-3-phosphate acyltransferase (209 aa).

5 helical membrane passes run 8-28 (NVLF…YILA), 78-98 (VLVL…LIGI), 124-144 (VLLV…LIVA), 149-169 (ISSL…FIVH), and 170-190 (PDMP…IIFY).

Belongs to the PlsY family. As to quaternary structure, probably interacts with PlsX.

The protein resides in the cell inner membrane. The catalysed reaction is an acyl phosphate + sn-glycerol 3-phosphate = a 1-acyl-sn-glycero-3-phosphate + phosphate. The protein operates within lipid metabolism; phospholipid metabolism. Functionally, catalyzes the transfer of an acyl group from acyl-phosphate (acyl-PO(4)) to glycerol-3-phosphate (G3P) to form lysophosphatidic acid (LPA). This enzyme utilizes acyl-phosphate as fatty acyl donor, but not acyl-CoA or acyl-ACP. The chain is Glycerol-3-phosphate acyltransferase from Nitratiruptor sp. (strain SB155-2).